We begin with the raw amino-acid sequence, 424 residues long: NADH-quinone oxidoreductase subunit H (424 aa).

Helical transmembrane passes span 11–31 (LVVA…LVAI), 79–99 (FVYF…FAFI), 119–139 (LPVA…GIVL), 160–180 (VISY…YAGS), 193–213 (VWYI…MVGE), 255–275 (VSAL…PLNL), 283–303 (WWPV…YFWL), 317–337 (ALGW…AAVI), and 347–367 (YWTP…VMSL). The disordered stretch occupies residues 376 to 424 (AVTKARRRGKQPAAGPDEQGALEPLFPTPPLPMKPLAQPVGASKENARG).

Belongs to the complex I subunit 1 family. As to quaternary structure, NDH-1 is composed of 14 different subunits. Subunits NuoA, H, J, K, L, M, N constitute the membrane sector of the complex.

The protein resides in the cell membrane. The catalysed reaction is a quinone + NADH + 5 H(+)(in) = a quinol + NAD(+) + 4 H(+)(out). Functionally, NDH-1 shuttles electrons from NADH, via FMN and iron-sulfur (Fe-S) centers, to quinones in the respiratory chain. The immediate electron acceptor for the enzyme in this species is believed to be menaquinone. Couples the redox reaction to proton translocation (for every two electrons transferred, four hydrogen ions are translocated across the cytoplasmic membrane), and thus conserves the redox energy in a proton gradient. This subunit may bind ubiquinone. The sequence is that of NADH-quinone oxidoreductase subunit H from Mycobacterium ulcerans (strain Agy99).